A 334-amino-acid polypeptide reads, in one-letter code: S-adenosylmethionine:tRNA ribosyltransferase-isomerase (334 aa).

The protein belongs to the QueA family. In terms of assembly, monomer.

The protein localises to the cytoplasm. The enzyme catalyses 7-aminomethyl-7-carbaguanosine(34) in tRNA + S-adenosyl-L-methionine = epoxyqueuosine(34) in tRNA + adenine + L-methionine + 2 H(+). It functions in the pathway tRNA modification; tRNA-queuosine biosynthesis. Its function is as follows. Transfers and isomerizes the ribose moiety from AdoMet to the 7-aminomethyl group of 7-deazaguanine (preQ1-tRNA) to give epoxyqueuosine (oQ-tRNA). This Thermosipho melanesiensis (strain DSM 12029 / CIP 104789 / BI429) protein is S-adenosylmethionine:tRNA ribosyltransferase-isomerase.